The sequence spans 237 residues: Fluoroquinolones export permease protein MT2761 (237 aa).

Helical transmembrane passes span 20–40 (FLHAAVFSGLIWLAVLLPMPV), 49–69 (YVLVGDIAIIGFFFVGGTVFF), 96–116 (VLLAISLFVAVVVATIVHGLG), 119–139 (LLPLVAGIVLGTLLMLLVGFS), 147–167 (VTDWFLAAVIPLAIMLAPPVV), and 199–219 (LAPWQVGYAVVYPIVCAAGLC).

The complex is composed of 2 ATP-binding proteins and 2 transmembrane proteins.

The protein resides in the cell membrane. Its function is as follows. Part of the ABC transporter complex involved in fluoroquinolones export. Probably responsible for the translocation of the substrate across the membrane. This chain is Fluoroquinolones export permease protein MT2761, found in Mycobacterium tuberculosis (strain CDC 1551 / Oshkosh).